Here is a 94-residue protein sequence, read N- to C-terminus: Selenoprotein K (94 aa).

The chain crosses the membrane as a helical span at residues leucine 20–leucine 42. Positions lysine 48–arginine 94 are disordered. Residue selenocysteine 92 is a non-standard amino acid, selenocysteine.

This sequence belongs to the selenoprotein K family. As to quaternary structure, interacts with DERL1, DERL2, DERL3 and SELENOS. The SELENOK-SELENOS complex interacts with VCP. Interacts with ZDHHC6. Cleaved by CAPN2/m-calpain in resting macrophages but not in activated macrophages. Macrophage activation up-regulates expression of the calpain inhibitor CAST/calpastatin, resulting in inhibition of CAPN2 activity. Post-translationally, truncated SELENOK proteins produced by failed UGA/Sec decoding are ubiquitinated by the CRL2(KLHDC2) complex, which recognizes the diglycine (Gly-Gly) at the C-terminus of truncated SELENOK proteins.

The protein resides in the endoplasmic reticulum membrane. The protein localises to the cell membrane. In terms of biological role, required for Ca(2+) flux in immune cells and plays a role in T-cell proliferation and in T-cell and neutrophil migration. Involved in endoplasmic reticulum-associated degradation (ERAD) of soluble glycosylated proteins. Required for palmitoylation and cell surface expression of CD36 and involved in macrophage uptake of low-density lipoprotein and in foam cell formation. Together with ZDHHC6, required for palmitoylation of ITPR1 in immune cells, leading to regulate ITPR1 stability and function. Plays a role in protection of cells from ER stress-induced apoptosis. Protects cells from oxidative stress when overexpressed in cardiomyocytes. The sequence is that of Selenoprotein K from Sus scrofa (Pig).